We begin with the raw amino-acid sequence, 232 residues long: 7-cyano-7-deazaguanine synthase (232 aa).

13–23 (LSGGLDSATVL) is an ATP binding site. Residues C194, C204, C207, and C210 each coordinate Zn(2+).

This sequence belongs to the QueC family. Zn(2+) serves as cofactor.

It carries out the reaction 7-carboxy-7-deazaguanine + NH4(+) + ATP = 7-cyano-7-deazaguanine + ADP + phosphate + H2O + H(+). It participates in purine metabolism; 7-cyano-7-deazaguanine biosynthesis. Catalyzes the ATP-dependent conversion of 7-carboxy-7-deazaguanine (CDG) to 7-cyano-7-deazaguanine (preQ(0)). The chain is 7-cyano-7-deazaguanine synthase from Hydrogenovibrio crunogenus (strain DSM 25203 / XCL-2) (Thiomicrospira crunogena).